Consider the following 143-residue polypeptide: Peptide methionine sulfoxide reductase MsrB (143 aa).

Positions 16–139 (DAELRRRLTP…NSAALNFESR (124 aa)) constitute a MsrB domain. Residues cysteine 55, cysteine 58, cysteine 104, and cysteine 107 each contribute to the Zn(2+) site. Catalysis depends on cysteine 128, which acts as the Nucleophile.

This sequence belongs to the MsrB Met sulfoxide reductase family. Zn(2+) serves as cofactor.

It catalyses the reaction L-methionyl-[protein] + [thioredoxin]-disulfide + H2O = L-methionyl-(R)-S-oxide-[protein] + [thioredoxin]-dithiol. The sequence is that of Peptide methionine sulfoxide reductase MsrB from Burkholderia orbicola (strain MC0-3).